The chain runs to 689 residues: Glycine--tRNA ligase beta subunit (689 aa).

Belongs to the class-II aminoacyl-tRNA synthetase family. In terms of assembly, tetramer of two alpha and two beta subunits.

It is found in the cytoplasm. The catalysed reaction is tRNA(Gly) + glycine + ATP = glycyl-tRNA(Gly) + AMP + diphosphate. This chain is Glycine--tRNA ligase beta subunit, found in Acinetobacter baumannii (strain ACICU).